The primary structure comprises 360 residues: SPRY domain-containing SOCS box protein 3 (360 aa).

Positions 21-54 (DQDGRSPALHAEEEAWGYDSDGQHSNSDSDTDLL) are disordered. Residues 84–274 (SLHPFRQIKS…MKVIRSCCCR (191 aa)) enclose the B30.2/SPRY domain. The 52-residue stretch at 264 to 315 (SMKVIRSCCCRTSLQYLCCARLRQLLPGSVDSLEVLPLPPGLKQVLSNKLGW) folds into the SOCS box domain. The tract at residues 322 to 350 (NRSSQHKGDGSATTSCGSYSDSSCTPGHD) is disordered. Residues 332-346 (SATTSCGSYSDSSCT) show a composition bias toward polar residues.

This sequence belongs to the SPSB family. As to quaternary structure, substrate-recognition component of the ECS(SPSB3) complex, composed of spsb3, cul5, elob, elob and rnf7/rbx2.

The protein resides in the nucleus. Its pathway is protein modification; protein ubiquitination. In terms of biological role, substrate-recognition component of a cullin-5-RING E3 ubiquitin-protein ligase complex (ECS complex, also named CRL5 complex), which mediates the ubiquitination and subsequent proteasomal degradation of target proteins. This chain is SPRY domain-containing SOCS box protein 3 (spsb3), found in Xenopus laevis (African clawed frog).